The primary structure comprises 353 residues: Protein MGF 360-13L (353 aa).

This sequence belongs to the asfivirus MGF 360 family.

Its function is as follows. Plays a role in virus cell tropism, and may be required for efficient virus replication in macrophages. The polypeptide is Protein MGF 360-13L (African swine fever virus (isolate Pig/Kenya/KEN-50/1950) (ASFV)).